The chain runs to 215 residues: MGKEKRKKLIYRFQFNSIYFFSDKKATPGNSLPSNNSKEAPPPVETWEILSVTPYFLATVAVSPPPMMTVLPAAELLTTSSNKALVPAANFSNSKTPGGPFQTMVLAFATVAANNFLDSGPLSNPCQPAGIPSLSVTVLVLASAEKASAMMKSTGKTTSTPLALAFSINFGTISAPALSKMESPISVFSKTFLKVKAIPPPMMIESTLSNKLSIN.

This is an uncharacterized protein from Saccharomyces cerevisiae (strain ATCC 204508 / S288c) (Baker's yeast).